A 255-amino-acid chain; its full sequence is Indole-3-glycerol phosphate synthase (255 aa).

The protein belongs to the TrpC family.

It carries out the reaction 1-(2-carboxyphenylamino)-1-deoxy-D-ribulose 5-phosphate + H(+) = (1S,2R)-1-C-(indol-3-yl)glycerol 3-phosphate + CO2 + H2O. The protein operates within amino-acid biosynthesis; L-tryptophan biosynthesis; L-tryptophan from chorismate: step 4/5. The chain is Indole-3-glycerol phosphate synthase from Streptococcus sanguinis (strain SK36).